Here is a 187-residue protein sequence, read N- to C-terminus: dCTP deaminase (187 aa).

DCTP-binding positions include 107-112 (KSTYAR), 131-133 (TLE), Gln-152, Tyr-166, Lys-175, and Gln-176. The Proton donor/acceptor role is filled by Glu-133.

It belongs to the dCTP deaminase family. Homotrimer.

The catalysed reaction is dCTP + H2O + H(+) = dUTP + NH4(+). It participates in pyrimidine metabolism; dUMP biosynthesis; dUMP from dCTP (dUTP route): step 1/2. Its function is as follows. Catalyzes the deamination of dCTP to dUTP. This chain is dCTP deaminase, found in Ehrlichia canis (strain Jake).